The chain runs to 307 residues: N-myc-interactor (307 aa).

The disordered stretch occupies residues 1-24 (MEADKDDTQQILKEHSPDEFIKDE). A Phosphoserine modification is found at Ser16. A Glycyl lysine isopeptide (Lys-Gly) (interchain with G-Cter in ubiquitin) cross-link involves residue Lys22. Residues 30–64 (IDEITKKNIQLKKEIQKLETELQEATKEFQIKEDI) adopt a coiled-coil conformation. NID domains are found at residues 103–192 (GQAL…GEVD) and 201–292 (GSAV…EVDV).

It belongs to the NMI family. As to quaternary structure, interacts with MYCN and MYC, as well as with other transcription factors with a Zip, HLH or a HLH-Zip motif. Interacts with all STAT proteins except STAT2. Interacts with IRF7, the interaction is direct and leads to the inhibition of IRF7-mediated type I IFN production. Interacts (via coiled-coil domain) with TRIM21 (via the SPRY domain); the interaction leads to 'Lys-63'-linked ubiquitination of NMI. Interacts with IFI35; the interaction is direct and is facilitated by TRIM21. Interacts with TLR4; the interaction is direct and leads to NF-kappa-B activation. (Microbial infection) Interacts with human cytomegalovirus protein UL23; this interaction inhibits NMI-mediated transcription of interferon-gamma stimulated genes. Ubiquitinated. 'Lys-63'-linked ubiquitination by TRIM21 promotes interaction with IFI35 and inhibits virus-triggered type I IFN-beta production. In terms of tissue distribution, expressed in adult spleen, liver, and kidney. Expressed in fetal thymus, liver, placenta, spleen, lung, and kidney but not brain. Expressed in macrophages.

Its subcellular location is the cytoplasm. The protein resides in the nucleus. It localises to the secreted. Functionally, acts as a signaling pathway regulator involved in innate immune system response. In response to interleukin 2/IL2 and interferon IFN-gamma/IFNG, interacts with signal transducer and activator of transcription/STAT which activate the transcription of downstream genes involved in a multitude of signals for development and homeostasis. Enhances the recruitment of CBP/p300 coactivators to STAT1 and STAT5, resulting in increased STAT1- and STAT5-dependent transcription. In response to interferon IFN-alpha, associates in a complex with signaling pathway regulator IFI35 to regulate immune response; the complex formation prevents proteasome-mediated degradation of IFI35. In complex with IFI35, inhibits virus-triggered type I IFN-beta production when ubiquitinated by ubiquitin-protein ligase TRIM21. In complex with IFI35, negatively regulates nuclear factor NF-kappa-B signaling by inhibiting the nuclear translocation, activation and transcription of NF-kappa-B subunit p65/RELA, resulting in the inhibition of endothelial cell proliferation, migration and re-endothelialization of injured arteries. Negatively regulates virus-triggered type I interferon/IFN production by inducing proteosome-dependent degradation of IRF7, a transcriptional regulator of type I IFN, thereby interfering with cellular antiviral responses. Beside its role as an intracellular signaling pathway regulator, also functions extracellularly as damage-associated molecular patterns (DAMPs) to promote inflammation, when actively released by macrophage to the extracellular space during cell injury or pathogen invasion. Macrophage-secreted NMI activates NF-kappa-B signaling in adjacent macrophages through Toll-like receptor 4/TLR4 binding and activation, thereby inducing NF-kappa-B translocation from the cytoplasm into the nucleus which promotes the release of pro-inflammatory cytokines. In Homo sapiens (Human), this protein is N-myc-interactor.